A 324-amino-acid chain; its full sequence is Aldo-keto reductase family 1 member A1-A (324 aa).

NADP(+) contacts are provided by residues 10 to 19 (GQRMPTVGLG), T20, W21, and D44. Catalysis depends on Y49, which acts as the Proton donor. NADP(+) contacts are provided by S161, N162, S210, L212, S214, K262, S263, V264, T265, R268, Q271, and N272.

It belongs to the aldo/keto reductase family.

It is found in the cytoplasm. The protein localises to the cytosol. Its subcellular location is the apical cell membrane. It carries out the reaction a primary alcohol + NADP(+) = an aldehyde + NADPH + H(+). The enzyme catalyses S-nitroso-CoA + NADPH + H(+) = sulfinamide-CoA + NADP(+). It catalyses the reaction S-nitrosoglutathione + NADPH + H(+) = S-(hydroxysulfenamide)glutathione + NADP(+). In terms of biological role, catalyzes the NADPH-dependent reduction of a wide variety of carbonyl-containing compounds to their corresponding alcohols. Displays enzymatic activity towards endogenous metabolites such as aromatic and aliphatic aldehydes, ketones, monosaccharides and bile acids. Acts as an aldehyde-detoxification enzyme. Also acts as an inhibitor of protein S-nitrosylation by mediating degradation of S-nitroso-coenzyme A (S-nitroso-CoA), a cofactor required to S-nitrosylate proteins. Also acts as a S-nitroso-glutathione reductase by catalyzing the NADPH-dependent reduction of S-nitrosoglutathione. Displays no reductase activity towards retinoids. The protein is Aldo-keto reductase family 1 member A1-A (akr1a1a) of Danio rerio (Zebrafish).